A 264-amino-acid chain; its full sequence is Virulence plasmid protein pGP3-D (264 aa).

This chain is Virulence plasmid protein pGP3-D, found in Chlamydia muridarum (strain MoPn / Nigg).